A 518-amino-acid polypeptide reads, in one-letter code: DNA-(apurinic or apyrimidinic site) endonuclease 2 (518 aa).

The Mg(2+) site is built by Asn-8 and Glu-48. The active site involves Tyr-156. Mg(2+)-binding residues include Asp-197, Asn-199, Asp-303, and His-304. Catalysis depends on Asp-197, which acts as the Proton donor/acceptor. His-304 serves as the catalytic Proton acceptor. The segment covering Ser-355–Gln-405 has biased composition (polar residues). Positions Ser-355 to Ser-407 are disordered. Lys-371 is covalently cross-linked (Glycyl lysine isopeptide (Lys-Gly) (interchain with G-Cter in ubiquitin)). Positions Gln-390–Phe-397 are required for the interaction and colocalization with PCNA in nuclear foci in presence of oxidative-induced DNA damaging agents. The Zn(2+) site is built by Cys-469, His-472, Cys-495, and Cys-509. The GRF-type zinc finger occupies Cys-469–Ser-518.

The protein belongs to the DNA repair enzymes AP/ExoA family. Interacts with PCNA; this interaction is triggered by reactive oxygen species and increased by misincorporation of uracil in nuclear DNA. The cofactor is Mg(2+). Requires Mn(2+) as cofactor. Post-translationally, ubiquitinated by the CUL9-RBX1 complex. Ubiquitinated by MKRN3 at Lys-371 leading to proteasomal degradation. In terms of tissue distribution, highly expressed in brain and kidney. Weakly expressed in the fetal brain.

It localises to the nucleus. The protein resides in the cytoplasm. Its subcellular location is the mitochondrion. The enzyme catalyses Exonucleolytic cleavage in the 3'- to 5'-direction to yield nucleoside 5'-phosphates.. Its activity is regulated as follows. 3'-5' exonuclease activity is activated by sodium and manganese. 3'-5' exonuclease and 3'-phosphodiesterase activities are stimulated in presence of PCNA. In terms of biological role, functions as a weak apurinic/apyrimidinic (AP) endodeoxyribonuclease in the DNA base excision repair (BER) pathway of DNA lesions induced by oxidative and alkylating agents. Initiates repair of AP sites in DNA by catalyzing hydrolytic incision of the phosphodiester backbone immediately adjacent to the damage, generating a single-strand break with 5'-deoxyribose phosphate and 3'-hydroxyl ends. Also displays double-stranded DNA 3'-5' exonuclease, 3'-phosphodiesterase activities. Shows robust 3'-5' exonuclease activity on 3'-recessed heteroduplex DNA and is able to remove mismatched nucleotides preferentially. Also exhibits 3'-5' exonuclease activity on a single nucleotide gap containing heteroduplex DNA and on blunt-ended substrates. Shows fairly strong 3'-phosphodiesterase activity involved in the removal of 3'-damaged termini formed in DNA by oxidative agents. In the nucleus functions in the PCNA-dependent BER pathway. Plays a role in reversing blocked 3' DNA ends, problematic lesions that preclude DNA synthesis. Required for somatic hypermutation (SHM) and DNA cleavage step of class switch recombination (CSR) of immunoglobulin genes. Required for proper cell cycle progression during proliferation of peripheral lymphocytes. This chain is DNA-(apurinic or apyrimidinic site) endonuclease 2 (APEX2), found in Homo sapiens (Human).